A 259-amino-acid chain; its full sequence is Heat-labile enterotoxin IIA, A chain (259 aa).

The N-terminal stretch at 1–18 (MIKHVLLFFVFISFSVSA) is a signal peptide. 23 to 37 (RADSRTPDEIRRAGG) contacts NAD(+). Residue glutamate 128 is part of the active site. A disulfide bond links cysteine 203 and cysteine 215.

It belongs to the enterotoxin A family. As to quaternary structure, heterohexamer of one A chain and of five B chains.

Its function is as follows. The biological activity of the toxin is produced by the A chain, which activates intracellular adenyl cyclase. This chain is Heat-labile enterotoxin IIA, A chain, found in Escherichia coli.